Consider the following 173-residue polypeptide: MAKSRKSNRDKSKDSNWQERVIQIRRVSKVVKGGKKLSFRAIVVVGNEKGQVGVGVGKAGDVIGAVRKGVADGKKQLIDVSLTKSSSITHVAKGVSGGAKVIVRPAAPGTGVIAGGAVRTVLELAGLKNILAKQLGSNNPLNNARAVINALEGLRTFSEVAQERGVPLEHLYT.

The S5 DRBM domain maps to 17-80; that stretch reads WQERVIQIRR…ADGKKQLIDV (64 aa).

This sequence belongs to the universal ribosomal protein uS5 family. Part of the 30S ribosomal subunit. Contacts proteins S4 and S8.

With S4 and S12 plays an important role in translational accuracy. In terms of biological role, located at the back of the 30S subunit body where it stabilizes the conformation of the head with respect to the body. The protein is Small ribosomal subunit protein uS5 of Crocosphaera subtropica (strain ATCC 51142 / BH68) (Cyanothece sp. (strain ATCC 51142)).